We begin with the raw amino-acid sequence, 284 residues long: MEMO1 family protein Mevan_0697 (284 aa).

Belongs to the MEMO1 family.

This Methanococcus vannielii (strain ATCC 35089 / DSM 1224 / JCM 13029 / OCM 148 / SB) protein is MEMO1 family protein Mevan_0697.